Reading from the N-terminus, the 157-residue chain is UPF0225 protein PA1039 (157 aa).

The protein belongs to the UPF0225 family.

The polypeptide is UPF0225 protein PA1039 (Pseudomonas aeruginosa (strain ATCC 15692 / DSM 22644 / CIP 104116 / JCM 14847 / LMG 12228 / 1C / PRS 101 / PAO1)).